The sequence spans 765 residues: 5-methyltetrahydropteroyltriglutamate--homocysteine methyltransferase 1 (765 aa).

Residues Lys18 and Asn116 each coordinate 5-methyltetrahydropteroyltri-L-glutamate. Ile437–Ser439 contacts L-homocysteine. Residues Ile437 to Ser439 and Glu490 each bind L-methionine. 5-methyltetrahydropteroyltri-L-glutamate contacts are provided by residues Arg521–Cys522 and Trp567. L-homocysteine is bound at residue Asp605. Asp605 serves as a coordination point for L-methionine. Positions 647, 649, 658, 662, and 671 each coordinate Zn(2+). The active-site Proton donor is the His701. Cys733 contributes to the Zn(2+) binding site.

It belongs to the vitamin-B12 independent methionine synthase family. Zn(2+) is required as a cofactor. As to expression, expressed in leaves, stems, flowers, siliques and seeds.

The protein resides in the cytoplasm. Its subcellular location is the cytosol. It carries out the reaction 5-methyltetrahydropteroyltri-L-glutamate + L-homocysteine = tetrahydropteroyltri-L-glutamate + L-methionine. It participates in amino-acid biosynthesis; L-methionine biosynthesis via de novo pathway; L-methionine from L-homocysteine (MetE route): step 1/1. Its function is as follows. Catalyzes the transfer of a methyl group from 5-methyltetrahydrofolate to homocysteine resulting in methionine formation. In Arabidopsis thaliana (Mouse-ear cress), this protein is 5-methyltetrahydropteroyltriglutamate--homocysteine methyltransferase 1 (MS1).